The sequence spans 373 residues: Flagellar P-ring protein (373 aa).

The first 26 residues, 1-26, serve as a signal peptide directing secretion; that stretch reads MRLLFRFLTLVAVLAMSLADVAPAWA.

This sequence belongs to the FlgI family. As to quaternary structure, the basal body constitutes a major portion of the flagellar organelle and consists of four rings (L,P,S, and M) mounted on a central rod.

It is found in the periplasm. It localises to the bacterial flagellum basal body. In terms of biological role, assembles around the rod to form the L-ring and probably protects the motor/basal body from shearing forces during rotation. This is Flagellar P-ring protein from Rhizobium etli (strain CIAT 652).